We begin with the raw amino-acid sequence, 310 residues long: DPDIVLPGNLGLLSEAYDRCGEVCAEYAKTFYLGTMLMTPDRRRAIWAIYVWCRRTDELVDGPNASHITPQALDRWEARLEDIFNGRPFDMLDAALSDTVSRFPVDIQPFRDMVEGMRMDLWKSRYNNFDELYLYCYYVAGTVGLMSVPIMGIAPESKATTESVYNAALALGIANQLTNILRDVGEDARRGRVYLPQDELAQAGLSDEDIFAGKVTDKWRIFMKKQIQRARKFFDEAEKGVTELSSASRWPVLASLLLYRKILDEIEANDYNNFTRRAYVSKPKKLLTLPIAYARSLVPPKSTSCPLAKT.

A chloroplast-targeting transit peptide spans 1–25 (DPDIVLPGNLGLLSEAYDRCGEVCA).

It belongs to the phytoene/squalene synthase family. Monomer.

The protein resides in the plastid. It is found in the chloroplast. It carries out the reaction 2 (2E,6E,10E)-geranylgeranyl diphosphate = 15-cis-phytoene + 2 diphosphate. It functions in the pathway carotenoid biosynthesis; phytoene biosynthesis; all-trans-phytoene from geranylgeranyl diphosphate: step 1/1. Functionally, catalyzes the reaction from prephytoene diphosphate to phytoene. This is Phytoene synthase 2, chloroplastic (PSY2) from Solanum lycopersicum (Tomato).